The chain runs to 161 residues: Arachidonate 5-lipoxygenase-activating protein (161 aa).

Residues 1-8 (MDQEAVGN) lie on the Lumenal side of the membrane. The chain crosses the membrane as a helical span at residues 9-30 (VVLLAIVTLISVVQNAFFAHKV). At 31 to 52 (ELESKAQSGRSFQRTGTLAFER) the chain is on the cytoplasmic side. The chain crosses the membrane as a helical span at residues 53-77 (VYTANQNCVDAYPTFLVVLWTAGLL). Residues 78–80 (CSQ) are Lumenal-facing. Residues 81 to 102 (VPAAFAGLMYLFVRQKYFVGYL) form a helical membrane-spanning segment. Residues 103-107 (GERTQ) lie on the Cytoplasmic side of the membrane. The stretch at 108-115 (STPGYIFG) is an intramembrane region. The chain crosses the membrane as a helical span at residues 116-128 (KRIILFLFLMSLA). At 129–161 (GILNHYLIFFFGSDFENYIRTITTTISPLLLIP) the chain is on the lumenal side.

It belongs to the MAPEG family. In terms of assembly, homotrimer. Interacts with LTC4S and ALOX5.

It is found in the nucleus membrane. The protein resides in the endoplasmic reticulum membrane. Functionally, required for leukotriene biosynthesis by ALOX5 (5-lipoxygenase). Anchors ALOX5 to the membrane. Binds arachidonic acid, and could play an essential role in the transfer of arachidonic acid to ALOX5. Binds to MK-886, a compound that blocks the biosynthesis of leukotrienes. The protein is Arachidonate 5-lipoxygenase-activating protein (Alox5ap) of Rattus norvegicus (Rat).